Consider the following 70-residue polypeptide: Protein SlyX homolog (70 aa).

This sequence belongs to the SlyX family.

In Agrobacterium fabrum (strain C58 / ATCC 33970) (Agrobacterium tumefaciens (strain C58)), this protein is Protein SlyX homolog.